The primary structure comprises 344 residues: MSQIIDALVIGGGPAGLGAALGLCRQNHSVVLLDSVSYRNTIDTIPDNRMHMVATWDHRRPDEFRVAARKELQRYERFKYREVEVVSVRQTTSTQSGKLEALFNAKAADGTEYAARKLILATGVKDVFPKIEGFSECWAKGMYVLSPNSNELCIARETKYRSFHCLFCHGYEDRNSESVGVLAVGECAETSTVARMARAAHQFSRSITIYTNGNSELGDQVYRLLGKEGWCSINNLGIKKVYMPQKTPASPITVQVELSDGTTKTEDFLVHKPATVQASALYTQLGLQLTAEGDIKVKEPMFETSKAGVFAVGDCASPNKFVSSASTSGGFAAAGAAMQLQAGF.

Residues 12–15 (GGPA), 34–39 (DSVSYR), histidine 51, and alanine 121 each bind FAD. Cysteines 165 and 168 form a disulfide. Residues aspartate 314 and 321 to 322 (FV) each bind FAD.

It belongs to the class-II pyridine nucleotide-disulfide oxidoreductase family. As to quaternary structure, homodimer. The cofactor is FAD.

The protein operates within mycotoxin biosynthesis. Thioredoxin reductase; part of the gene cluster that mediates the biosynthesis of gramillins A and B, bicyclic lipopeptides that induce cell death in maize leaves but not in wheat leaves. The nonribosomal peptide synthetase GRA1 incorporates respectively a glutamic adic (Glu), a leucine (Leu), a serine (Ser), a hydroxyglutamine (HOGln), a 2-amino decanoic acid, and 2 cysteins (CysB and CysA). The biosynthesis of 2-amino decanoic acid incorporated in gramillins could be initiated by a fatty acid synthase composed of the alpha and beta subunits FGSG_00036 and FGSG_11656. The cytochrome P450 monooxygenase FGSG_15680 could hydroxylate the fatty acid chain. Subsequent oxidation to the ketone by the oxidoreductase FGSG_00048 and transamination by aminotransferase FGSG_00049 could form 2-amino-decanoic acid. On the other hand, FGSG_15680 could also be responsible for the HO-modified glutamine at the gamma-position. Whether hydroxylation occurs on the fully assembled product or on the Gln residue prior to assembly into the gramillins requires further proof. The thioredoxin FGSG_00043 could also be required for the disulfide-bond formation between CysA and CysB. The specific involvement of the remaining proteins from the cluster is more difficult to discern, but could have broader regulatory (FGSG_00040 and FGSG_11657) or enzymatic functions (FGSG_00044 and FGSG_00045). The final C-domain of GRA1 does not possess the expected sequence of a termination CT domain, often implicated in macrocyclization and release of a cyclopeptidein fungal NRPs; and the thioesterase FGSG_00047 may act in concert with the terminal C-domain of GRA1 to catalyze the formation of the macrocyclic anhydride and release of the products. In Gibberella zeae (strain ATCC MYA-4620 / CBS 123657 / FGSC 9075 / NRRL 31084 / PH-1) (Wheat head blight fungus), this protein is Thioredoxin reductase FGSG_00043.